A 279-amino-acid chain; its full sequence is 3-methyl-2-oxobutanoate hydroxymethyltransferase (279 aa).

Mg(2+)-binding residues include Asp-43 and Asp-82. 3-methyl-2-oxobutanoate-binding positions include Asp-43–Ser-44, Asp-82, and Lys-112. Glu-114 is a Mg(2+) binding site. Glu-181 functions as the Proton acceptor in the catalytic mechanism.

Belongs to the PanB family. In terms of assembly, homodecamer; pentamer of dimers. Mg(2+) is required as a cofactor.

The protein localises to the cytoplasm. It catalyses the reaction 3-methyl-2-oxobutanoate + (6R)-5,10-methylene-5,6,7,8-tetrahydrofolate + H2O = 2-dehydropantoate + (6S)-5,6,7,8-tetrahydrofolate. Its pathway is cofactor biosynthesis; (R)-pantothenate biosynthesis; (R)-pantoate from 3-methyl-2-oxobutanoate: step 1/2. Catalyzes the reversible reaction in which hydroxymethyl group from 5,10-methylenetetrahydrofolate is transferred onto alpha-ketoisovalerate to form ketopantoate. This Bacillus pumilus (strain SAFR-032) protein is 3-methyl-2-oxobutanoate hydroxymethyltransferase.